The sequence spans 386 residues: 8-amino-7-oxononanoate synthase (386 aa).

Substrate is bound at residue Arg20. 107 to 108 (GY) provides a ligand contact to pyridoxal 5'-phosphate. A substrate-binding site is contributed by His132. Positions 178, 206, and 234 each coordinate pyridoxal 5'-phosphate. Lys237 is subject to N6-(pyridoxal phosphate)lysine. Thr351 serves as a coordination point for substrate.

The protein belongs to the class-II pyridoxal-phosphate-dependent aminotransferase family. BioF subfamily. Homodimer. Pyridoxal 5'-phosphate is required as a cofactor.

The enzyme catalyses 6-carboxyhexanoyl-[ACP] + L-alanine + H(+) = (8S)-8-amino-7-oxononanoate + holo-[ACP] + CO2. It participates in cofactor biosynthesis; biotin biosynthesis. Functionally, catalyzes the decarboxylative condensation of pimeloyl-[acyl-carrier protein] and L-alanine to produce 8-amino-7-oxononanoate (AON), [acyl-carrier protein], and carbon dioxide. In Aromatoleum aromaticum (strain DSM 19018 / LMG 30748 / EbN1) (Azoarcus sp. (strain EbN1)), this protein is 8-amino-7-oxononanoate synthase.